We begin with the raw amino-acid sequence, 279 residues long: Sulfur carrier protein FdhD (279 aa).

The Cysteine persulfide intermediate role is filled by cysteine 112.

Belongs to the FdhD family.

It localises to the cytoplasm. In terms of biological role, required for formate dehydrogenase (FDH) activity. Acts as a sulfur carrier protein that transfers sulfur from IscS to the molybdenum cofactor prior to its insertion into FDH. The polypeptide is Sulfur carrier protein FdhD (Nocardia farcinica (strain IFM 10152)).